The chain runs to 299 residues: Regucalcin (299 aa).

Glu-18 contributes to the a divalent metal cation binding site. The substrate site is built by Arg-101, Asn-103, and Glu-121. Lys-144 is modified (N6-succinyllysine). A divalent metal cation is bound by residues Asn-154 and Asp-204. Asp-204 (proton donor/acceptor) is an active-site residue. N6-succinyllysine occurs at positions 244 and 253. Ser-268 is modified (phosphoserine).

This sequence belongs to the SMP-30/CGR1 family. Monomer. It depends on Zn(2+) as a cofactor. Mn(2+) is required as a cofactor. Requires Ca(2+) as cofactor. The cofactor is Mg(2+). Co(2+) serves as cofactor. The N-terminus is blocked. Detected in liver (at protein level). Hepatocytes and renal proximal tubular epithelium.

Its subcellular location is the cytoplasm. It catalyses the reaction D-glucono-1,5-lactone + H2O = D-gluconate + H(+). The protein operates within cofactor biosynthesis; L-ascorbate biosynthesis via UDP-alpha-D-glucuronate pathway; L-ascorbate from UDP-alpha-D-glucuronate: step 3/4. Its function is as follows. Gluconolactonase with low activity towards other sugar lactones, including gulonolactone and galactonolactone. Catalyzes a key step in ascorbic acid (vitamin C) biosynthesis. Can also hydrolyze diisopropyl phosphorofluoridate and phenylacetate (in vitro). Calcium-binding protein. Modulates Ca(2+) signaling, and Ca(2+)-dependent cellular processes and enzyme activities. The polypeptide is Regucalcin (Rgn) (Rattus norvegicus (Rat)).